A 183-amino-acid polypeptide reads, in one-letter code: Large ribosomal subunit protein uL6 (183 aa).

The protein belongs to the universal ribosomal protein uL6 family. In terms of assembly, part of the 50S ribosomal subunit.

This protein binds to the 23S rRNA, and is important in its secondary structure. It is located near the subunit interface in the base of the L7/L12 stalk, and near the tRNA binding site of the peptidyltransferase center. The chain is Large ribosomal subunit protein uL6 from Malacoplasma penetrans (strain HF-2) (Mycoplasma penetrans).